The sequence spans 314 residues: Homoserine O-succinyltransferase (314 aa).

The active-site Acyl-thioester intermediate is the cysteine 142. Substrate is bound by residues lysine 163 and serine 192. Histidine 235 functions as the Proton acceptor in the catalytic mechanism. The active site involves glutamate 237. Arginine 249 contributes to the substrate binding site.

The protein belongs to the MetA family.

The protein resides in the cytoplasm. The enzyme catalyses L-homoserine + succinyl-CoA = O-succinyl-L-homoserine + CoA. It participates in amino-acid biosynthesis; L-methionine biosynthesis via de novo pathway; O-succinyl-L-homoserine from L-homoserine: step 1/1. In terms of biological role, transfers a succinyl group from succinyl-CoA to L-homoserine, forming succinyl-L-homoserine. The protein is Homoserine O-succinyltransferase of Shewanella sediminis (strain HAW-EB3).